The sequence spans 273 residues: Urease accessory protein UreD (273 aa).

The protein belongs to the UreD family. In terms of assembly, ureD, UreF and UreG form a complex that acts as a GTP-hydrolysis-dependent molecular chaperone, activating the urease apoprotein by helping to assemble the nickel containing metallocenter of UreC. The UreE protein probably delivers the nickel.

Its subcellular location is the cytoplasm. In terms of biological role, required for maturation of urease via the functional incorporation of the urease nickel metallocenter. This is Urease accessory protein UreD from Rhizobium leguminosarum bv. viciae.